A 160-amino-acid polypeptide reads, in one-letter code: Endoribonuclease YbeY (160 aa).

Zn(2+)-binding residues include H121, H125, and H131.

This sequence belongs to the endoribonuclease YbeY family. Requires Zn(2+) as cofactor.

The protein localises to the cytoplasm. Its function is as follows. Single strand-specific metallo-endoribonuclease involved in late-stage 70S ribosome quality control and in maturation of the 3' terminus of the 16S rRNA. The polypeptide is Endoribonuclease YbeY (Syntrophus aciditrophicus (strain SB)).